Reading from the N-terminus, the 228-residue chain is Response regulator MprA (228 aa).

The 115-residue stretch at Arg-2–Leu-116 folds into the Response regulatory domain. Asp-46 bears the 4-aspartylphosphate mark. Residues Ser-127 to Glu-225 constitute a DNA-binding region (ompR/PhoB-type).

In terms of processing, phosphorylated and dephosphorylated by MprB.

The protein localises to the cytoplasm. In terms of biological role, member of the two-component regulatory system MprB/MprA which contributes to maintaining a balance among several systems involved in stress resistance and is required for establishment and maintenance of persistent infection in the host. Functions as a transcriptional regulator that recognizes a 19-bp nucleotide motif comprizing two loosely conserved 8-bp direct DNA-binding motif repeats separated by a 3-bp spacer region. In Mycobacterium leprae (strain TN), this protein is Response regulator MprA (mprA).